The sequence spans 434 residues: 26S proteasome regulatory subunit RPN6 (434 aa).

The residue at position 2 (Ser2) is an N-acetylserine. The PCI domain maps to 235-404 (AFSYFFESFE…GWLYVYETPN (170 aa)).

The protein belongs to the proteasome subunit S9 family. As to quaternary structure, component of the lid subcomplex of the 19S proteasome regulatory particle complex (also named PA700 complex). The 26S proteasome consists of a 20S proteasome core and two 19S regulatory subunits. In terms of processing, N-acetylated by NAT1.

Functionally, component of the lid subcomplex of the 26S proteasome, a multiprotein complex involved in the ATP-dependent degradation of ubiquitinated proteins. In the complex, RPN6 is required for proteasome assembly. The chain is 26S proteasome regulatory subunit RPN6 (RPN6) from Saccharomyces cerevisiae (strain ATCC 204508 / S288c) (Baker's yeast).